Consider the following 203-residue polypeptide: Histidine biosynthesis bifunctional protein HisIE (203 aa).

The segment at M1–F114 is phosphoribosyl-AMP cyclohydrolase. Positions L115–Q203 are phosphoribosyl-ATP pyrophosphohydrolase.

It in the N-terminal section; belongs to the PRA-CH family. In the C-terminal section; belongs to the PRA-PH family.

The protein resides in the cytoplasm. The enzyme catalyses 1-(5-phospho-beta-D-ribosyl)-ATP + H2O = 1-(5-phospho-beta-D-ribosyl)-5'-AMP + diphosphate + H(+). The catalysed reaction is 1-(5-phospho-beta-D-ribosyl)-5'-AMP + H2O = 1-(5-phospho-beta-D-ribosyl)-5-[(5-phospho-beta-D-ribosylamino)methylideneamino]imidazole-4-carboxamide. The protein operates within amino-acid biosynthesis; L-histidine biosynthesis; L-histidine from 5-phospho-alpha-D-ribose 1-diphosphate: step 2/9. It participates in amino-acid biosynthesis; L-histidine biosynthesis; L-histidine from 5-phospho-alpha-D-ribose 1-diphosphate: step 3/9. This is Histidine biosynthesis bifunctional protein HisIE (hisI) from Salmonella typhimurium (strain LT2 / SGSC1412 / ATCC 700720).